The primary structure comprises 375 residues: Tyrosine--tRNA ligase (375 aa).

Positions 37, 168, 172, 175, and 190 each coordinate L-tyrosine. A 'KMSKS' region motif is present at residues 251 to 255 (KMSKS). Position 254 (K254) interacts with ATP.

It belongs to the class-I aminoacyl-tRNA synthetase family. TyrS type 4 subfamily. In terms of assembly, homodimer.

It is found in the cytoplasm. The enzyme catalyses tRNA(Tyr) + L-tyrosine + ATP = L-tyrosyl-tRNA(Tyr) + AMP + diphosphate + H(+). Functionally, catalyzes the attachment of tyrosine to tRNA(Tyr) in a two-step reaction: tyrosine is first activated by ATP to form Tyr-AMP and then transferred to the acceptor end of tRNA(Tyr). The chain is Tyrosine--tRNA ligase from Pyrococcus abyssi (strain GE5 / Orsay).